The chain runs to 419 residues: Creatine kinase S-type, mitochondrial (419 aa).

A mitochondrion-targeting transit peptide spans Met1 to Ala39. The interval Glu40–Met64 is cardiolipin-binding. The 87-residue stretch at Lys46–Asn132 folds into the Phosphagen kinase N-terminal domain. Positions Tyr159–Leu401 constitute a Phosphagen kinase C-terminal domain. ATP is bound by residues Ser162–Arg166 and His225. At Tyr255 the chain carries Phosphotyrosine. ATP is bound by residues Arg270, Arg326, Arg354–Val359, and Asp369. Thr356 carries the post-translational modification Phosphothreonine.

This sequence belongs to the ATP:guanido phosphotransferase family. In terms of assembly, exists as an octamer composed of four CKMT2 homodimers.

Its subcellular location is the mitochondrion inner membrane. It catalyses the reaction creatine + ATP = N-phosphocreatine + ADP + H(+). In terms of biological role, reversibly catalyzes the transfer of phosphate between ATP and various phosphogens (e.g. creatine phosphate). Creatine kinase isoenzymes play a central role in energy transduction in tissues with large, fluctuating energy demands, such as skeletal muscle, heart, brain and spermatozoa. The chain is Creatine kinase S-type, mitochondrial (CKMT2) from Oryctolagus cuniculus (Rabbit).